The chain runs to 203 residues: 5-formyltetrahydrofolate cyclo-ligase (203 aa).

A2 bears the N-acetylalanine mark. ATP is bound by residues 10–14 (KRSLR) and R14. Substrate contacts are provided by residues L56, E61, and 148–152 (RGKGY). ATP is bound at residue 145 to 153 (RLGRGKGYY). Mg(2+) is bound by residues D154 and D189.

This sequence belongs to the 5-formyltetrahydrofolate cyclo-ligase family. Monomer. It depends on Mg(2+) as a cofactor.

It is found in the cytoplasm. The catalysed reaction is (6S)-5-formyl-5,6,7,8-tetrahydrofolate + ATP = (6R)-5,10-methenyltetrahydrofolate + ADP + phosphate. Contributes to tetrahydrofolate metabolism. Helps regulate carbon flow through the folate-dependent one-carbon metabolic network that supplies carbon for the biosynthesis of purines, thymidine and amino acids. Catalyzes the irreversible conversion of 5-formyltetrahydrofolate (5-FTHF) to yield 5,10-methenyltetrahydrofolate. The protein is 5-formyltetrahydrofolate cyclo-ligase (MTHFS) of Homo sapiens (Human).